A 749-amino-acid chain; its full sequence is 1,4-alpha-glucan branching enzyme GlgB (749 aa).

D427 acts as the Nucleophile in catalysis. The active-site Proton donor is E480.

The protein belongs to the glycosyl hydrolase 13 family. GlgB subfamily. As to quaternary structure, monomer.

The enzyme catalyses Transfers a segment of a (1-&gt;4)-alpha-D-glucan chain to a primary hydroxy group in a similar glucan chain.. It participates in glycan biosynthesis; glycogen biosynthesis. Catalyzes the formation of the alpha-1,6-glucosidic linkages in glycogen by scission of a 1,4-alpha-linked oligosaccharide from growing alpha-1,4-glucan chains and the subsequent attachment of the oligosaccharide to the alpha-1,6 position. The polypeptide is 1,4-alpha-glucan branching enzyme GlgB (Thermobifida fusca (strain YX)).